A 168-amino-acid polypeptide reads, in one-letter code: ATP synthase subunit b (168 aa).

Residues 9–29 (AIPFGTIAYTLFIFLLLLVML) form a helical membrane-spanning segment.

This sequence belongs to the ATPase B chain family. In terms of assembly, F-type ATPases have 2 components, F(1) - the catalytic core - and F(0) - the membrane proton channel. F(1) has five subunits: alpha(3), beta(3), gamma(1), delta(1), epsilon(1). F(0) has three main subunits: a(1), b(2) and c(10-14). The alpha and beta chains form an alternating ring which encloses part of the gamma chain. F(1) is attached to F(0) by a central stalk formed by the gamma and epsilon chains, while a peripheral stalk is formed by the delta and b chains.

The protein resides in the cell membrane. Functionally, f(1)F(0) ATP synthase produces ATP from ADP in the presence of a proton or sodium gradient. F-type ATPases consist of two structural domains, F(1) containing the extramembraneous catalytic core and F(0) containing the membrane proton channel, linked together by a central stalk and a peripheral stalk. During catalysis, ATP synthesis in the catalytic domain of F(1) is coupled via a rotary mechanism of the central stalk subunits to proton translocation. In terms of biological role, component of the F(0) channel, it forms part of the peripheral stalk, linking F(1) to F(0). This Bacillus thuringiensis (strain Al Hakam) protein is ATP synthase subunit b.